Reading from the N-terminus, the 742-residue chain is Conidiogenone synthase (742 aa).

The terpene cyclase stretch occupies residues 1–332 (MGETIADVYA…SLCVPRYFKV (332 aa)). Position 97 (D97) interacts with Mg(2+). Residues D97, 190–193 (RIVD), N234, 238–242 (SWDKE), and 328–329 (RY) each bind substrate. The DDXXD 1 signature appears at 97-101 (DDETD). The NSE/DTE motif lies at 234–242 (NDLFSWDKE). Residues 333–742 (ERNPYKDHLE…LRAMEEASQK (410 aa)) are prenyltransferase. Residues K414, R417, and H446 each contribute to the isopentenyl diphosphate site. The Mg(2+) site is built by D453 and D457. The short motif at 453-457 (DDIQD) is the DDXXD 2 element. R462 provides a ligand contact to dimethylallyl diphosphate. An isopentenyl diphosphate-binding site is contributed by R463. 6 residues coordinate dimethylallyl diphosphate: K539, T540, Q575, N582, K592, and K602. A disordered region spans residues 701-724 (EAHKSDSAWKVNQRRAWKGSQKNG).

The protein in the N-terminal section; belongs to the terpene synthase family. In the C-terminal section; belongs to the FPP/GGPP synthase family. In terms of assembly, hexamer. Mg(2+) serves as cofactor.

The enzyme catalyses isopentenyl diphosphate + (2E,6E)-farnesyl diphosphate = (2E,6E,10E)-geranylgeranyl diphosphate + diphosphate. It functions in the pathway secondary metabolite biosynthesis; terpenoid biosynthesis. Bifunctional terpene synthase; part of the gene cluster that mediates the biosynthesis of conidiogenone, a diterpene known to induce the conidiation. The bifunctional terpene synthase PrDS converts isopentenyl diphosphate (IPP) and dimethylallyl diphosphate (DMAPP) into deoxyconidiogenol. The C-terminal prenyltransferase (PT) domain of PrDS catalyzes formation of GGPP, whereas the N-terminal terpene cyclase (TC) domain catalyzes the cyclization of GGPP into deoxyconidiogenol. The cytochrome P450 monooxygenase PrP450 then catalyzes two rounds of oxidation to furnish conidiogenone. The sequence is that of Conidiogenone synthase from Penicillium roqueforti (strain FM164).